Consider the following 607-residue polypeptide: Elongation factor 4 (607 aa).

One can recognise a tr-type G domain in the interval 11–193 (EKIRNFSIIA…QIVEKVPAPQ (183 aa)). GTP is bound by residues 23–28 (DHGKST) and 140–143 (NKID).

Belongs to the TRAFAC class translation factor GTPase superfamily. Classic translation factor GTPase family. LepA subfamily.

It localises to the cell membrane. It catalyses the reaction GTP + H2O = GDP + phosphate + H(+). In terms of biological role, required for accurate and efficient protein synthesis under certain stress conditions. May act as a fidelity factor of the translation reaction, by catalyzing a one-codon backward translocation of tRNAs on improperly translocated ribosomes. Back-translocation proceeds from a post-translocation (POST) complex to a pre-translocation (PRE) complex, thus giving elongation factor G a second chance to translocate the tRNAs correctly. Binds to ribosomes in a GTP-dependent manner. This Lactococcus lactis subsp. cremoris (strain MG1363) protein is Elongation factor 4.